The chain runs to 1179 residues: DNA-directed RNA polymerase subunit beta (1179 aa).

It belongs to the RNA polymerase beta chain family. In terms of assembly, the RNAP catalytic core consists of 2 alpha, 1 beta, 1 beta' and 1 omega subunit. When a sigma factor is associated with the core the holoenzyme is formed, which can initiate transcription.

It carries out the reaction RNA(n) + a ribonucleoside 5'-triphosphate = RNA(n+1) + diphosphate. Functionally, DNA-dependent RNA polymerase catalyzes the transcription of DNA into RNA using the four ribonucleoside triphosphates as substrates. This is DNA-directed RNA polymerase subunit beta from Oceanobacillus iheyensis (strain DSM 14371 / CIP 107618 / JCM 11309 / KCTC 3954 / HTE831).